The primary structure comprises 365 residues: Chaperone protein DnaJ (365 aa).

The J domain maps to 4-70 (DYYKILGVDR…EKRRIYDQTG (67 aa)). The CR-type zinc-finger motif lies at 139 to 220 (GTEKRIKFRR…CNGTGTIVVD (82 aa)). Positions 152, 155, 168, 171, 194, 197, 208, and 211 each coordinate Zn(2+). CXXCXGXG motif repeat units follow at residues 152–159 (CPDCKGTG), 168–175 (CPTCHGTG), 194–201 (CNTCGGKG), and 208–215 (CPRCNGTG).

Belongs to the DnaJ family. Homodimer. Requires Zn(2+) as cofactor.

It is found in the cytoplasm. Functionally, participates actively in the response to hyperosmotic and heat shock by preventing the aggregation of stress-denatured proteins and by disaggregating proteins, also in an autonomous, DnaK-independent fashion. Unfolded proteins bind initially to DnaJ; upon interaction with the DnaJ-bound protein, DnaK hydrolyzes its bound ATP, resulting in the formation of a stable complex. GrpE releases ADP from DnaK; ATP binding to DnaK triggers the release of the substrate protein, thus completing the reaction cycle. Several rounds of ATP-dependent interactions between DnaJ, DnaK and GrpE are required for fully efficient folding. Also involved, together with DnaK and GrpE, in the DNA replication of plasmids through activation of initiation proteins. The chain is Chaperone protein DnaJ from Thermoplasma volcanium (strain ATCC 51530 / DSM 4299 / JCM 9571 / NBRC 15438 / GSS1).